The following is a 422-amino-acid chain: O-methyltransferase kk1A (422 aa).

Position 277 (D277) interacts with S-adenosyl-L-methionine. Residue H320 is the Proton acceptor of the active site.

Belongs to the class I-like SAM-binding methyltransferase superfamily. Cation-independent O-methyltransferase family.

The protein operates within secondary metabolite biosynthesis. Its function is as follows. O-methyltransferase; part of the gene cluster that mediates the biosynthesis of KK-1, a novel cyclic depsipeptide with 10 residues which is a promising active compound with high activity against many plant pathogens, especially Botrytis cinerea. Within the pathway, kk1A is responsible for the O-methylation of tyrosine as a free amino acid before its activation as an aminoacyl-AMP by the corresponding A domain of kk1B. The nonribosomal peptide synthetase (NRPS) kk1B catalyzes the elongation and cyclization of the decapeptide chain composed of 1 D-lactic acid residue (D-Lac), 1 pipecolic acid residue (Pip), 1 aspartic acid residue (Asp), 1 isoleucine residue (Ile), 1 glycine residue (Gly), 1 tyrosine residue (Tyr) and 4 valine residues (Val). The Asp, Ile and 3 Val residues are N-methylated by the 5 methyltransferase domains from the NRPS (found in modules 3, 5, 6, 7 and 9), whereas the Tyr residue is O-methylated by the cluster encoded O-methyltransferase kk1A. The thioesterase kk1J is likely to be involved in the corrective mechanism of peptide chain synthesis. The D-lactate dehydrogenase kk1H is involved in the synthesis of D-lactic acid from pyruvic acid, which is recognized by the A domain of the first kk1B module. The pyrroline-5-carboxylate reductase kk1I is involved in the synthesis of the L-pipecolic acid residue of KK-1 from delta-1-pyrroline-5-carboxylate (P5C), a metabolic intermediate of lysine. It is still unclear how kk1C and kk1D are involved in the production of KK-1. The chain is O-methyltransferase kk1A from Curvularia clavata.